Reading from the N-terminus, the 320-residue chain is MYAFDYEDIQLIPNMCVVNSRSECNTSVTLGKHTFKMPVVPANMATVINEELSIMLAEKNYFYVMHRFDFDAVSFIKKMKEKKLISSISVGVKEQDFKMINELTELNLIPDYITIDIAHGHANSVKEMIEHIRTKMGDQTFIIAGNVATPQAVRDLEHWGADATKVGVGPGKVCITKLKTGFGTGGWQLGAIKWCSKAATKPIIADGGLRVNGDIAKSIRFGATMCMIGSLFAAHEESPGKNVTVDNVLFKEYYGSASEYNKGEKRYVEGKKELIKVRGKLMDTYKEMEEDLQSSISYAGGKTLKAIKKVDYVILKTSNF.

The Thioimidate intermediate role is filled by Cys174. NADP(+) is bound at residue Ile203–Cys226.

Belongs to the IMPDH/GMPR family. GuaC type 2 subfamily.

The catalysed reaction is IMP + NH4(+) + NADP(+) = GMP + NADPH + 2 H(+). In terms of biological role, catalyzes the irreversible NADPH-dependent deamination of GMP to IMP. It functions in the conversion of nucleobase, nucleoside and nucleotide derivatives of G to A nucleotides, and in maintaining the intracellular balance of A and G nucleotides. In Mesoplasma florum (strain ATCC 33453 / NBRC 100688 / NCTC 11704 / L1) (Acholeplasma florum), this protein is GMP reductase.